A 190-amino-acid polypeptide reads, in one-letter code: Potassium-transporting ATPase KdpC subunit (190 aa).

The helical transmembrane segment at 10-30 (TFIFLLLITGGVYPLLTTVLG) threads the bilayer.

It belongs to the KdpC family. In terms of assembly, the system is composed of three essential subunits: KdpA, KdpB and KdpC.

The protein resides in the cell inner membrane. Functionally, part of the high-affinity ATP-driven potassium transport (or Kdp) system, which catalyzes the hydrolysis of ATP coupled with the electrogenic transport of potassium into the cytoplasm. This subunit acts as a catalytic chaperone that increases the ATP-binding affinity of the ATP-hydrolyzing subunit KdpB by the formation of a transient KdpB/KdpC/ATP ternary complex. In Shigella dysenteriae serotype 1 (strain Sd197), this protein is Potassium-transporting ATPase KdpC subunit.